Here is a 139-residue protein sequence, read N- to C-terminus: Small ribosomal subunit protein uS9 (139 aa).

This sequence belongs to the universal ribosomal protein uS9 family.

The chain is Small ribosomal subunit protein uS9 from Coxiella burnetii (strain CbuK_Q154) (Coxiella burnetii (strain Q154)).